A 309-amino-acid polypeptide reads, in one-letter code: Olfactory receptor 6C4 (309 aa).

Residues 1-23 (MKNRTMFGEFILLGLTNQPELQV) lie on the Extracellular side of the membrane. Residue asparagine 3 is glycosylated (N-linked (GlcNAc...) asparagine). Residues 24 to 44 (MIFIFLFLTYMLSILGNLTII) traverse the membrane as a helical segment. Topologically, residues 45 to 52 (TLTLLDPH) are cytoplasmic. A helical membrane pass occupies residues 53 to 73 (LQTPMYFFLRNFSFLEISFTS). Residues 74 to 97 (IFIPRFLTSMTTGNKVISFAGCLT) lie on the Extracellular side of the membrane. An intrachain disulfide couples cysteine 95 to cysteine 187. The helical transmembrane segment at 98-118 (QYFFAIFLGATEFYLLASMSY) threads the bilayer. Residues 119-137 (DRYVAICKPLHYLTIMSSR) lie on the Cytoplasmic side of the membrane. The helical transmembrane segment at 138–158 (VCIQLVFCSWLGGFLAILPPI) threads the bilayer. At 159–195 (ILMTQVDFCVSNILNHYYCDYGPLVELACSDTSLLEL) the chain is on the extracellular side. A helical membrane pass occupies residues 196 to 215 (MVILLAVVTLMVTLVLVTLS). Residues 216-235 (YTYIIRTILRIPSAQQRTKA) are Cytoplasmic-facing. The helical transmembrane segment at 236 to 256 (FSTCSSHMIVISLSYGSCMFM) threads the bilayer. Residues 257 to 269 (YINPSAKEGGAFN) lie on the Extracellular side of the membrane. Residues 270-290 (KGIAVLITSVTPLLNPFIYTL) form a helical membrane-spanning segment. Residues 291-309 (RNQQVKQAFKDSVKKIVKL) are Cytoplasmic-facing.

Belongs to the G-protein coupled receptor 1 family.

It localises to the cell membrane. In terms of biological role, odorant receptor. The polypeptide is Olfactory receptor 6C4 (OR6C4) (Homo sapiens (Human)).